Reading from the N-terminus, the 60-residue chain is Short neurotoxin 1 (60 aa).

4 disulfides stabilise this stretch: cysteine 3–cysteine 22, cysteine 17–cysteine 39, cysteine 41–cysteine 52, and cysteine 53–cysteine 58.

It belongs to the three-finger toxin family. Short-chain subfamily. Type I alpha-neurotoxin sub-subfamily. Expressed by the venom gland.

It is found in the secreted. Functionally, binds to muscle nicotinic acetylcholine receptor (nAChR) and inhibit acetylcholine from binding to the receptor, thereby impairing neuromuscular transmission. This is Short neurotoxin 1 from Dendroaspis jamesoni kaimosae (Eastern Jameson's mamba).